A 230-amino-acid polypeptide reads, in one-letter code: Response regulator MprA (230 aa).

Residues 4–118 form the Response regulatory domain; the sequence is RILVVDDDRA…ELLARMRALL (115 aa). At aspartate 48 the chain carries 4-aspartylphosphate. The segment at residues 129 to 227 is a DNA-binding region (ompR/PhoB-type); it reads SMAMRFSDLT…VRGVGYVLRE (99 aa).

In terms of assembly, monomer. Interaction with each conserved 8-bp repeat requires tandem binding by two protein monomers. Post-translationally, phosphorylated and dephosphorylated by MprB.

The protein localises to the cytoplasm. Member of the two-component regulatory system MprB/MprA which contributes to maintaining a balance among several systems involved in stress resistance and is required for establishment and maintenance of persistent infection in the host. Functions as a transcriptional regulator that recognizes a 19-bp nucleotide motif comprizing two loosely conserved 8-bp direct DNA-binding motif repeats separated by a 3-bp spacer region. MprB/MprA up-regulates expression of mprA and pepD. The chain is Response regulator MprA (mprA) from Mycobacterium bovis (strain ATCC BAA-935 / AF2122/97).